The chain runs to 263 residues: Endonuclease 8 (263 aa).

Residue Pro2 is the Schiff-base intermediate with DNA of the active site. Catalysis depends on Glu3, which acts as the Proton donor. The active-site Proton donor; for beta-elimination activity is Lys53. Residues Gln70, Arg125, and Asn169 each coordinate DNA. The FPG-type zinc finger occupies 229-263 (KVFHRDGEVCERCGGIIEKTTLSSRPFYWCPHCQK). Arg253 functions as the Proton donor; for delta-elimination activity in the catalytic mechanism.

This sequence belongs to the FPG family. It depends on Zn(2+) as a cofactor.

It catalyses the reaction 2'-deoxyribonucleotide-(2'-deoxyribose 5'-phosphate)-2'-deoxyribonucleotide-DNA = a 3'-end 2'-deoxyribonucleotide-(2,3-dehydro-2,3-deoxyribose 5'-phosphate)-DNA + a 5'-end 5'-phospho-2'-deoxyribonucleoside-DNA + H(+). Its function is as follows. Involved in base excision repair of DNA damaged by oxidation or by mutagenic agents. Acts as a DNA glycosylase that recognizes and removes damaged bases. Has a preference for oxidized pyrimidines, such as thymine glycol, 5,6-dihydrouracil and 5,6-dihydrothymine. Has AP (apurinic/apyrimidinic) lyase activity and introduces nicks in the DNA strand. Cleaves the DNA backbone by beta-delta elimination to generate a single-strand break at the site of the removed base with both 3'- and 5'-phosphates. The chain is Endonuclease 8 from Salmonella newport (strain SL254).